A 460-amino-acid chain; its full sequence is Interleukin-1 receptor-associated kinase 4 (460 aa).

M1 carries the N-acetylmethionine modification. The Death domain maps to 20-104 (RKLSDFIDPQ…APASLLLPDA (85 aa)). K34 carries the post-translational modification N6-acetyllysine. The Protein kinase domain occupies 186–454 (SVGGNKMGEG…PDIKKVQQLL (269 aa)). Residues 192 to 200 (MGEGGFGVV) and K213 contribute to the ATP site. D311 acts as the Proton acceptor in catalysis. ATP contacts are provided by residues 313-316 (KSAN) and D329. Residues T342 and T345 each carry the phosphothreonine modification. S346 bears the Phosphoserine mark.

Belongs to the protein kinase superfamily. TKL Ser/Thr protein kinase family. Pelle subfamily. As to quaternary structure, associates with MYD88 and IRAK2 to form a ternary complex called the Myddosome. Once phosphorylated, IRAK4 dissociates from the receptor complex and then associates with the TNF receptor-associated factor 6 (TRAF6), IRAK1, and PELI1; this intermediate complex is required for subsequent NF-kappa-B activation. Direct binding of SMAD6 to PELI1 prevents complex formation and hence negatively regulates IL1R-TLR signaling and eventually NF-kappa-B-mediated gene expression. Interacts with IL1RL1. Interacts (when phosphorylated) with IRAK1. May interact (when phosphorylated) with IRAK3. Requires Mg(2+) as cofactor. In terms of processing, phosphorylated.

Its subcellular location is the cytoplasm. The catalysed reaction is L-seryl-[protein] + ATP = O-phospho-L-seryl-[protein] + ADP + H(+). It carries out the reaction L-threonyl-[protein] + ATP = O-phospho-L-threonyl-[protein] + ADP + H(+). Serine/threonine-protein kinase that plays a critical role in initiating innate immune response against foreign pathogens. Involved in Toll-like receptor (TLR) and IL-1R signaling pathways. Is rapidly recruited by MYD88 to the receptor-signaling complex upon TLR activation to form the Myddosome together with IRAK2. Phosphorylates initially IRAK1, thus stimulating the kinase activity and intensive autophosphorylation of IRAK1. Phosphorylates E3 ubiquitin ligases Pellino proteins (PELI1, PELI2 and PELI3) to promote pellino-mediated polyubiquitination of IRAK1. Then, the ubiquitin-binding domain of IKBKG/NEMO binds to polyubiquitinated IRAK1 bringing together the IRAK1-MAP3K7/TAK1-TRAF6 complex and the NEMO-IKKA-IKKB complex. In turn, MAP3K7/TAK1 activates IKKs (CHUK/IKKA and IKBKB/IKKB) leading to NF-kappa-B nuclear translocation and activation. Alternatively, phosphorylates TIRAP to promote its ubiquitination and subsequent degradation. Phosphorylates NCF1 and regulates NADPH oxidase activation after LPS stimulation suggesting a similar mechanism during microbial infections. The protein is Interleukin-1 receptor-associated kinase 4 (IRAK4) of Homo sapiens (Human).